We begin with the raw amino-acid sequence, 244 residues long: 1-(5-phosphoribosyl)-5-[(5-phosphoribosylamino)methylideneamino] imidazole-4-carboxamide isomerase (244 aa).

Residue Asp8 is the Proton acceptor of the active site. Residue Asp130 is the Proton donor of the active site.

It belongs to the HisA/HisF family.

The protein localises to the cytoplasm. The catalysed reaction is 1-(5-phospho-beta-D-ribosyl)-5-[(5-phospho-beta-D-ribosylamino)methylideneamino]imidazole-4-carboxamide = 5-[(5-phospho-1-deoxy-D-ribulos-1-ylimino)methylamino]-1-(5-phospho-beta-D-ribosyl)imidazole-4-carboxamide. Its pathway is amino-acid biosynthesis; L-histidine biosynthesis; L-histidine from 5-phospho-alpha-D-ribose 1-diphosphate: step 4/9. The polypeptide is 1-(5-phosphoribosyl)-5-[(5-phosphoribosylamino)methylideneamino] imidazole-4-carboxamide isomerase (Hahella chejuensis (strain KCTC 2396)).